Reading from the N-terminus, the 400-residue chain is Nicotinate phosphoribosyltransferase (400 aa).

At H220 the chain carries Phosphohistidine; by autocatalysis.

The protein belongs to the NAPRTase family. Post-translationally, transiently phosphorylated on a His residue during the reaction cycle. Phosphorylation strongly increases the affinity for substrates and increases the rate of nicotinate D-ribonucleotide production. Dephosphorylation regenerates the low-affinity form of the enzyme, leading to product release.

The enzyme catalyses nicotinate + 5-phospho-alpha-D-ribose 1-diphosphate + ATP + H2O = nicotinate beta-D-ribonucleotide + ADP + phosphate + diphosphate. It participates in cofactor biosynthesis; NAD(+) biosynthesis; nicotinate D-ribonucleotide from nicotinate: step 1/1. Catalyzes the synthesis of beta-nicotinate D-ribonucleotide from nicotinate and 5-phospho-D-ribose 1-phosphate at the expense of ATP. This chain is Nicotinate phosphoribosyltransferase, found in Salmonella dublin (strain CT_02021853).